The sequence spans 336 residues: tRNA N6-adenosine threonylcarbamoyltransferase (336 aa).

Residues His-114 and His-118 each coordinate Fe cation. Residues 136-140 (LVSGG), Asp-169, Gly-182, Asp-186, and Asn-275 each bind substrate. Residue Asp-301 coordinates Fe cation.

Belongs to the KAE1 / TsaD family. The cofactor is Fe(2+).

The protein localises to the cytoplasm. It carries out the reaction L-threonylcarbamoyladenylate + adenosine(37) in tRNA = N(6)-L-threonylcarbamoyladenosine(37) in tRNA + AMP + H(+). In terms of biological role, required for the formation of a threonylcarbamoyl group on adenosine at position 37 (t(6)A37) in tRNAs that read codons beginning with adenine. Is involved in the transfer of the threonylcarbamoyl moiety of threonylcarbamoyl-AMP (TC-AMP) to the N6 group of A37, together with TsaE and TsaB. TsaD likely plays a direct catalytic role in this reaction. This chain is tRNA N6-adenosine threonylcarbamoyltransferase, found in Streptococcus pneumoniae (strain P1031).